The chain runs to 423 residues: Gamma-glutamyl phosphate reductase (423 aa).

The protein belongs to the gamma-glutamyl phosphate reductase family.

It is found in the cytoplasm. The enzyme catalyses L-glutamate 5-semialdehyde + phosphate + NADP(+) = L-glutamyl 5-phosphate + NADPH + H(+). The protein operates within amino-acid biosynthesis; L-proline biosynthesis; L-glutamate 5-semialdehyde from L-glutamate: step 2/2. In terms of biological role, catalyzes the NADPH-dependent reduction of L-glutamate 5-phosphate into L-glutamate 5-semialdehyde and phosphate. The product spontaneously undergoes cyclization to form 1-pyrroline-5-carboxylate. This is Gamma-glutamyl phosphate reductase from Paramagnetospirillum magneticum (strain ATCC 700264 / AMB-1) (Magnetospirillum magneticum).